A 52-amino-acid chain; its full sequence is Large ribosomal subunit protein bL33 (52 aa).

Belongs to the bacterial ribosomal protein bL33 family.

This chain is Large ribosomal subunit protein bL33, found in Chlamydia abortus (strain DSM 27085 / S26/3) (Chlamydophila abortus).